Here is a 160-residue protein sequence, read N- to C-terminus: Large ribosomal subunit protein uL13 (160 aa).

This sequence belongs to the universal ribosomal protein uL13 family. As to quaternary structure, part of the 50S ribosomal subunit.

Its function is as follows. This protein is one of the early assembly proteins of the 50S ribosomal subunit, although it is not seen to bind rRNA by itself. It is important during the early stages of 50S assembly. This Orientia tsutsugamushi (strain Ikeda) (Rickettsia tsutsugamushi) protein is Large ribosomal subunit protein uL13.